Consider the following 473-residue polypeptide: Probable lipid II flippase MurJ (473 aa).

The next 13 membrane-spanning stretches (helical) occupy residues 31 to 51, 90 to 110, 125 to 145, 153 to 173, 177 to 197, 215 to 235, 253 to 273, 300 to 320, 327 to 347, 360 to 380, 382 to 402, 414 to 434, and 439 to 459; these read TFGA…PFFL, LVTL…ASIF, LIRL…FYSV, FLPA…CLFG, WAAA…LPFG, FFGT…DVNV, LYQL…LSTL, IGLM…GAFT, SAQI…FNLL, PFFA…ILGF, MGAS…FVFL, IFKI…LRGS, and LGTI…SKLL.

Belongs to the MurJ/MviN family.

The protein resides in the cell inner membrane. It participates in cell wall biogenesis; peptidoglycan biosynthesis. In terms of biological role, involved in peptidoglycan biosynthesis. Transports lipid-linked peptidoglycan precursors from the inner to the outer leaflet of the cytoplasmic membrane. The chain is Probable lipid II flippase MurJ from Thermotoga maritima (strain ATCC 43589 / DSM 3109 / JCM 10099 / NBRC 100826 / MSB8).